The following is a 409-amino-acid chain: Pleckstrin homology domain-containing family O member 1 (409 aa).

The interval 1 to 24 (MMKKNNSAKRGPQDGNQQPAPPEK) is disordered. The 112-residue stretch at 21 to 132 (PPEKVGWVRK…WINALNSAIT (112 aa)) folds into the PH domain. The segment at 133 to 193 (RAKNRILDEV…MLTLDLIQEE (61 aa)) is interaction with capping proteins (CPs). The interaction with ATM, CKIP, IFP35 and NMI stretch occupies residues 136 to 308 (NRILDEVTVE…LPNPGQLSRI (173 aa)). The tract at residues 218-267 (LAGSRRRADSDRIQPSADRASSLSRPWEKTDKGATYTPQAPKKLTPTEKG) is disordered. Residues S227 and S271 each carry the phosphoserine modification. Positions 308–409 (IQDLVARKLE…PHSQYRKSLM (102 aa)) are negative regulator of AP-1 activity. Disordered stretches follow at residues 325–350 (EVQG…ESEQ) and 390–409 (TPDS…KSLM). Basic and acidic residues predominate over residues 331 to 340 (DGKRKAKDPP). S342 is modified (phosphoserine). Polar residues predominate over residues 390–402 (TPDSHLRQTTPHS).

As to quaternary structure, heterodimer or homodimer. Interacts with CK2 and actin capping subunits (capping protein CP-alpha and CP-beta). CKIP1 and CK2 together inhibit the activity of actin capping protein at the barbed ends of actin filaments. Interacts with ATM, IFP35, JUN, JUND, NMI and PI3K. Interacts with AKT1, AKT2 and AKT3 (each isozyme of PKB), PtdIns(3,5)P2, PtdIns(4,5)P2 and PtdIns(3,4,5)P2. Post-translationally, C-terminal fragments could be released during apoptosis via caspase-3-dependent cleavage. As to expression, abundantly expressed in skeletal muscle and heart, moderately in kidney, liver, brain and placenta and sparingly in the pancreas and lung. Easily detectable in cell lines such as MOLT-4, HEK293 and Jurkat.

The protein localises to the cell membrane. Its subcellular location is the nucleus. It is found in the cytoplasm. Its function is as follows. Plays a role in the regulation of the actin cytoskeleton through its interactions with actin capping protein (CP). May function to target CK2 to the plasma membrane thereby serving as an adapter to facilitate the phosphorylation of CP by protein kinase 2 (CK2). Appears to target ATM to the plasma membrane. Appears to also inhibit tumor cell growth by inhibiting AKT-mediated cell-survival. Also implicated in PI3K-regulated muscle differentiation, the regulation of AP-1 activity (plasma membrane bound AP-1 regulator that translocates to the nucleus) and the promotion of apoptosis induced by tumor necrosis factor TNF. When bound to PKB, it inhibits it probably by decreasing PKB level of phosphorylation. This Homo sapiens (Human) protein is Pleckstrin homology domain-containing family O member 1 (PLEKHO1).